Here is a 324-residue protein sequence, read N- to C-terminus: UDP-N-acetylenolpyruvoylglucosamine reductase (324 aa).

Residues 36-203 (FRAGGLAELM…THAIFEGYAE (168 aa)) enclose the FAD-binding PCMH-type domain. The active site involves R183. The active-site Proton donor is the S232. E302 is an active-site residue.

This sequence belongs to the MurB family. The cofactor is FAD.

Its subcellular location is the cytoplasm. The catalysed reaction is UDP-N-acetyl-alpha-D-muramate + NADP(+) = UDP-N-acetyl-3-O-(1-carboxyvinyl)-alpha-D-glucosamine + NADPH + H(+). It functions in the pathway cell wall biogenesis; peptidoglycan biosynthesis. Cell wall formation. The sequence is that of UDP-N-acetylenolpyruvoylglucosamine reductase from Rhizobium meliloti (strain 1021) (Ensifer meliloti).